The sequence spans 160 residues: Putative tRNA (cytidine(34)-2'-O)-methyltransferase (160 aa).

The S-adenosyl-L-methionine site is built by Ile-82, Gly-107, Leu-128, and Ser-136.

Belongs to the class IV-like SAM-binding methyltransferase superfamily. RNA methyltransferase TrmH family. TrmL subfamily.

It localises to the cytoplasm. It carries out the reaction cytidine(34) in tRNA + S-adenosyl-L-methionine = 2'-O-methylcytidine(34) in tRNA + S-adenosyl-L-homocysteine + H(+). It catalyses the reaction 5-carboxymethylaminomethyluridine(34) in tRNA(Leu) + S-adenosyl-L-methionine = 5-carboxymethylaminomethyl-2'-O-methyluridine(34) in tRNA(Leu) + S-adenosyl-L-homocysteine + H(+). Could methylate the ribose at the nucleotide 34 wobble position in tRNA. In Bacillus subtilis (strain 168), this protein is Putative tRNA (cytidine(34)-2'-O)-methyltransferase (cspR).